Consider the following 1466-residue polypeptide: DNA-directed RNA polymerase subunit beta'' (1466 aa).

The Zn(2+) site is built by Cys220, Cys296, Cys303, and Cys306. The disordered stretch occupies residues 618-725; it reads TREEDLEDEY…EDEYDSSEED (108 aa). 3 stretches are compositionally biased toward acidic residues: residues 621–631, 639–651, and 707–725; these read EDLEDEYETLE, DEYEYETLEDEYG, and LEEDLEEDSEDEYDSSEED.

It belongs to the RNA polymerase beta' chain family. RpoC2 subfamily. In plastids the minimal PEP RNA polymerase catalytic core is composed of four subunits: alpha, beta, beta', and beta''. When a (nuclear-encoded) sigma factor is associated with the core the holoenzyme is formed, which can initiate transcription. It depends on Zn(2+) as a cofactor.

Its subcellular location is the plastid. The protein localises to the chloroplast. It catalyses the reaction RNA(n) + a ribonucleoside 5'-triphosphate = RNA(n+1) + diphosphate. In terms of biological role, DNA-dependent RNA polymerase catalyzes the transcription of DNA into RNA using the four ribonucleoside triphosphates as substrates. The protein is DNA-directed RNA polymerase subunit beta'' of Agrostis stolonifera (Creeping bentgrass).